A 148-amino-acid polypeptide reads, in one-letter code: Large ribosomal subunit protein bL9 (148 aa).

It belongs to the bacterial ribosomal protein bL9 family.

In terms of biological role, binds to the 23S rRNA. The protein is Large ribosomal subunit protein bL9 of Streptomyces griseus subsp. griseus (strain JCM 4626 / CBS 651.72 / NBRC 13350 / KCC S-0626 / ISP 5235).